Here is a 581-residue protein sequence, read N- to C-terminus: NADH-quinone oxidoreductase subunit C/D (581 aa).

The segment at 1–172 is NADH dehydrogenase I subunit C; it reads MSAFELVTEL…PLFNMTASLF (172 aa). The interval 196 to 581 is NADH dehydrogenase I subunit D; it reads ELMILNYGPH…IDYVMSDVDR (386 aa).

It in the N-terminal section; belongs to the complex I 30 kDa subunit family. This sequence in the C-terminal section; belongs to the complex I 49 kDa subunit family. As to quaternary structure, NDH-1 is composed of 13 different subunits. Subunits NuoB, CD, E, F, and G constitute the peripheral sector of the complex.

Its subcellular location is the cell inner membrane. It catalyses the reaction a quinone + NADH + 5 H(+)(in) = a quinol + NAD(+) + 4 H(+)(out). Functionally, NDH-1 shuttles electrons from NADH, via FMN and iron-sulfur (Fe-S) centers, to quinones in the respiratory chain. The immediate electron acceptor for the enzyme in this species is believed to be ubiquinone. Couples the redox reaction to proton translocation (for every two electrons transferred, four hydrogen ions are translocated across the cytoplasmic membrane), and thus conserves the redox energy in a proton gradient. This is NADH-quinone oxidoreductase subunit C/D from Rhodopseudomonas palustris (strain ATCC BAA-98 / CGA009).